A 125-amino-acid polypeptide reads, in one-letter code: Large ribosomal subunit protein bL17 (125 aa).

The protein belongs to the bacterial ribosomal protein bL17 family. As to quaternary structure, part of the 50S ribosomal subunit. Contacts protein L32.

The chain is Large ribosomal subunit protein bL17 from Blochmanniella pennsylvanica (strain BPEN).